The primary structure comprises 795 residues: Phenylalanine--tRNA ligase beta subunit (795 aa).

One can recognise a tRNA-binding domain in the interval 39-148 (AGSFHGVVVG…ADAPIGTDIR (110 aa)). The 76-residue stretch at 401–476 (PKRATITLRR…RVYGYNNIPD (76 aa)) folds into the B5 domain. 4 residues coordinate Mg(2+): Asp-454, Asp-460, Glu-463, and Glu-464. The 94-residue stretch at 701-794 (SRFPANRRDI…LKERFQASLR (94 aa)) folds into the FDX-ACB domain.

The protein belongs to the phenylalanyl-tRNA synthetase beta subunit family. Type 1 subfamily. As to quaternary structure, tetramer of two alpha and two beta subunits. Mg(2+) serves as cofactor.

It localises to the cytoplasm. It catalyses the reaction tRNA(Phe) + L-phenylalanine + ATP = L-phenylalanyl-tRNA(Phe) + AMP + diphosphate + H(+). The protein is Phenylalanine--tRNA ligase beta subunit of Shigella flexneri.